The primary structure comprises 374 residues: Glutamate 5-kinase (374 aa).

An ATP-binding site is contributed by lysine 9. Substrate contacts are provided by serine 49, aspartate 136, and asparagine 148. Residues 168 to 169 (TD) and 210 to 216 (TGGMRSK) each bind ATP. In terms of domain architecture, PUA spans 276–354 (SGTITVDSGA…EEARQYSYLH (79 aa)).

Belongs to the glutamate 5-kinase family.

Its subcellular location is the cytoplasm. The catalysed reaction is L-glutamate + ATP = L-glutamyl 5-phosphate + ADP. Its pathway is amino-acid biosynthesis; L-proline biosynthesis; L-glutamate 5-semialdehyde from L-glutamate: step 1/2. Its function is as follows. Catalyzes the transfer of a phosphate group to glutamate to form L-glutamate 5-phosphate. This Geobacillus thermodenitrificans (strain NG80-2) protein is Glutamate 5-kinase.